We begin with the raw amino-acid sequence, 292 residues long: Glutamate racemase (292 aa).

Substrate contacts are provided by residues 10–11 (DS) and 42–43 (YG). C73 acts as the Proton donor/acceptor in catalysis. 74–75 (NS) contributes to the substrate binding site. The Proton donor/acceptor role is filled by C186. 187–188 (TH) provides a ligand contact to substrate.

It belongs to the aspartate/glutamate racemases family.

It catalyses the reaction L-glutamate = D-glutamate. It participates in cell wall biogenesis; peptidoglycan biosynthesis. Provides the (R)-glutamate required for cell wall biosynthesis. This Beutenbergia cavernae (strain ATCC BAA-8 / DSM 12333 / CCUG 43141 / JCM 11478 / NBRC 16432 / NCIMB 13614 / HKI 0122) protein is Glutamate racemase.